A 357-amino-acid polypeptide reads, in one-letter code: Meiotic driver wtf9 (357 aa).

The tract at residues 1 to 39 (MKNKYYPLRSSMDEMSAKNDNEIDLEKGPLPEYNSEDGS) is disordered. The span at 11-29 (SMDEMSAKNDNEIDLEKGP) shows a compositional bias: basic and acidic residues. 7 helical membrane passes run 89–109 (LLIS…CVNP), 119–139 (AFFV…FCFF), 149–169 (CIKV…ISLA), 198–218 (VVII…RSKF), 232–252 (CSIS…FWTL), 256–276 (FSGL…TKGL), and 286–306 (ATGY…LFFY).

Belongs to the WTF family. In terms of assembly, homomer. Forms protein aggregates. The two isoforms can interact with each other and with themselves. High sequence similarity is required for their interaction.

Its subcellular location is the spore membrane. The protein localises to the vacuole membrane. It localises to the ascus epiplasm. It is found in the cytoplasm. The protein resides in the endoplasmic reticulum membrane. Functionally, promotes unequal transmission of alleles from the parental zygote to progeny spores by acting as poison/antidote system where the poison and antidote proteins are produced from the same locus; the poison component is trans-acting and targets all spores within an ascus whereas the antidote component is spore-specific, leading to poisoning of all progeny that do not inherit the allele. Localizes isoform 2 to the vacuole thereby facilitating its degradation. In terms of biological role, forms toxic aggregates that disrupt spore maturation. The polypeptide is Meiotic driver wtf9 (Schizosaccharomyces kambucha (Fission yeast)).